A 75-amino-acid polypeptide reads, in one-letter code: Endogenous retrovirus group K member 5 Np9 protein (75 aa).

Positions Thr22 to Lys43 are disordered. A compositionally biased stretch (basic and acidic residues) spans Thr32–Lys43.

Its subcellular location is the nucleus. In terms of biological role, may possess a function in tumorigenesis. This chain is Endogenous retrovirus group K member 5 Np9 protein (ERVK-5), found in Homo sapiens (Human).